The sequence spans 940 residues: Isoleucine--tRNA ligase (940 aa).

A 'HIGH' region motif is present at residues 58–68 (PYANGSIHIGH). E564 contacts L-isoleucyl-5'-AMP. Residues 605–609 (KMSKS) carry the 'KMSKS' region motif. K608 serves as a coordination point for ATP. Zn(2+) contacts are provided by C903, C906, C923, and C926.

Belongs to the class-I aminoacyl-tRNA synthetase family. IleS type 1 subfamily. As to quaternary structure, monomer. The cofactor is Zn(2+).

It is found in the cytoplasm. It carries out the reaction tRNA(Ile) + L-isoleucine + ATP = L-isoleucyl-tRNA(Ile) + AMP + diphosphate. Its function is as follows. Catalyzes the attachment of isoleucine to tRNA(Ile). As IleRS can inadvertently accommodate and process structurally similar amino acids such as valine, to avoid such errors it has two additional distinct tRNA(Ile)-dependent editing activities. One activity is designated as 'pretransfer' editing and involves the hydrolysis of activated Val-AMP. The other activity is designated 'posttransfer' editing and involves deacylation of mischarged Val-tRNA(Ile). The protein is Isoleucine--tRNA ligase of Shewanella baltica (strain OS195).